A 358-amino-acid polypeptide reads, in one-letter code: 3-isopropylmalate dehydrogenase (358 aa).

77 to 90 (GPKWTHLPPDQQPE) lines the NAD(+) pocket. 4 residues coordinate substrate: arginine 98, arginine 108, arginine 137, and aspartate 226. Mg(2+) contacts are provided by aspartate 226, aspartate 250, and aspartate 254. 284–296 (GSAPDIAGKGIAN) lines the NAD(+) pocket.

This sequence belongs to the isocitrate and isopropylmalate dehydrogenases family. LeuB type 1 subfamily. Homodimer. Requires Mg(2+) as cofactor. Mn(2+) serves as cofactor.

The protein localises to the cytoplasm. It catalyses the reaction (2R,3S)-3-isopropylmalate + NAD(+) = 4-methyl-2-oxopentanoate + CO2 + NADH. It functions in the pathway amino-acid biosynthesis; L-leucine biosynthesis; L-leucine from 3-methyl-2-oxobutanoate: step 3/4. In terms of biological role, catalyzes the oxidation of 3-carboxy-2-hydroxy-4-methylpentanoate (3-isopropylmalate) to 3-carboxy-4-methyl-2-oxopentanoate. The product decarboxylates to 4-methyl-2 oxopentanoate. This Mannheimia succiniciproducens (strain KCTC 0769BP / MBEL55E) protein is 3-isopropylmalate dehydrogenase.